The chain runs to 370 residues: Dual-specificity RNA methyltransferase RlmN (370 aa).

The Proton acceptor role is filled by E93. In terms of domain architecture, Radical SAM core spans 99–337; sequence EEGRGTLCVS…VTTVRKTRGD (239 aa). C106 and C343 form a disulfide bridge. Positions 113, 117, and 120 each coordinate [4Fe-4S] cluster. S-adenosyl-L-methionine-binding positions include 167-168, S199, 221-223, and N300; these read GE and SLH. C343 serves as the catalytic S-methylcysteine intermediate.

It belongs to the radical SAM superfamily. RlmN family. [4Fe-4S] cluster serves as cofactor.

Its subcellular location is the cytoplasm. The catalysed reaction is adenosine(2503) in 23S rRNA + 2 reduced [2Fe-2S]-[ferredoxin] + 2 S-adenosyl-L-methionine = 2-methyladenosine(2503) in 23S rRNA + 5'-deoxyadenosine + L-methionine + 2 oxidized [2Fe-2S]-[ferredoxin] + S-adenosyl-L-homocysteine. It carries out the reaction adenosine(37) in tRNA + 2 reduced [2Fe-2S]-[ferredoxin] + 2 S-adenosyl-L-methionine = 2-methyladenosine(37) in tRNA + 5'-deoxyadenosine + L-methionine + 2 oxidized [2Fe-2S]-[ferredoxin] + S-adenosyl-L-homocysteine. Functionally, specifically methylates position 2 of adenine 2503 in 23S rRNA and position 2 of adenine 37 in tRNAs. m2A2503 modification seems to play a crucial role in the proofreading step occurring at the peptidyl transferase center and thus would serve to optimize ribosomal fidelity. The chain is Dual-specificity RNA methyltransferase RlmN from Francisella tularensis subsp. mediasiatica (strain FSC147).